The following is a 227-amino-acid chain: 2,3-bisphosphoglycerate-dependent phosphoglycerate mutase (227 aa).

Substrate is bound by residues 7-14 (RHGQSEWN), 20-21 (TG), Arg59, 86-89 (ERHY), Lys97, 113-114 (RR), and 182-183 (GN). Residue His8 is the Tele-phosphohistidine intermediate of the active site. Glu86 (proton donor/acceptor) is an active-site residue.

It belongs to the phosphoglycerate mutase family. BPG-dependent PGAM subfamily. In terms of assembly, homodimer.

It carries out the reaction (2R)-2-phosphoglycerate = (2R)-3-phosphoglycerate. The protein operates within carbohydrate degradation; glycolysis; pyruvate from D-glyceraldehyde 3-phosphate: step 3/5. Catalyzes the interconversion of 2-phosphoglycerate and 3-phosphoglycerate. This is 2,3-bisphosphoglycerate-dependent phosphoglycerate mutase from Neisseria gonorrhoeae (strain ATCC 700825 / FA 1090).